A 119-amino-acid polypeptide reads, in one-letter code: Large ribosomal subunit protein bL19 (119 aa).

This sequence belongs to the bacterial ribosomal protein bL19 family.

Its function is as follows. This protein is located at the 30S-50S ribosomal subunit interface and may play a role in the structure and function of the aminoacyl-tRNA binding site. The sequence is that of Large ribosomal subunit protein bL19 (rplS) from Mycoplasma pneumoniae (strain ATCC 29342 / M129 / Subtype 1) (Mycoplasmoides pneumoniae).